Reading from the N-terminus, the 338-residue chain is MQKKSIYVAYTGGTIGMQRSEQGYIPVSGHLQRQLALMPEFHRPEMPDFTIHEYTPLMDSSDMTPEDWQHIAEDIKAHYDDYDGFVILHGTDTMAYTASALSFMLENLGKPVIVTGSQIPLAELRSDGQINLLNALYVAANYPINEVTLFFNNRLYRGNRTTKAHADGFDAFASPNLPPLLEAGIHIRRLNTPPAPHGEGELIVHPITPQPIGVVTIYPGISADVVRNFLRQPVKALILRSYGVGNAPQNKAFLQELQEASDRGIVVVNLTQCMSGKVNMGGYATGNALAHAGVIGGADMTVEATLTKLHYLLSQELDTETIRKAMSQNLRGELTPDD.

In terms of domain architecture, Asparaginase/glutaminase spans 4–329 (KSIYVAYTGG…ETIRKAMSQN (326 aa)). Residue threonine 14 is the O-isoaspartyl threonine intermediate of the active site. Residues 59–61 (DSS) and 91–92 (TD) contribute to the substrate site.

Belongs to the asparaginase 1 family. Homotetramer.

It is found in the cytoplasm. The enzyme catalyses L-asparagine + H2O = L-aspartate + NH4(+). This Escherichia coli O157:H7 protein is L-asparaginase 1 (ansA).